The following is a 229-amino-acid chain: MEVSKIRIHDLPEEERPRERLIKNGPESLSNAELLGIVLRTGSREENVISLCSRILMEYNIKQLSLANVSKLMQVNGIGKAKAAQIAAVFELARRLETFVEEPKRKISSPKDVYTLMYPKMREQKKEKFITLYLDTKNQILKEEVVSIGSLNASIVHPREVFKSALMESSASVIMVHNHPSGDPSPSREDIMVTEKLVEGGKLLGIDILDHIIIGDGRYVSLKDEGFVK.

An MPN domain is found at Lys-106–Val-228. Zn(2+) is bound by residues His-177, His-179, and Asp-190. The JAMM motif signature appears at His-177–Asp-190.

It belongs to the UPF0758 family.

This is UPF0758 protein MM_2791 from Methanosarcina mazei (strain ATCC BAA-159 / DSM 3647 / Goe1 / Go1 / JCM 11833 / OCM 88) (Methanosarcina frisia).